A 255-amino-acid polypeptide reads, in one-letter code: Large ribosomal subunit protein eL8 (255 aa).

The segment covering methionine 1–lysine 16 has biased composition (basic residues). Residues methionine 1–serine 28 are disordered.

Belongs to the eukaryotic ribosomal protein eL8 family.

The chain is Large ribosomal subunit protein eL8 (RPL7A) from Tetrahymena thermophila.